The following is a 640-amino-acid chain: Fructose-1,6-bisphosphatase class 3 (640 aa).

The protein belongs to the FBPase class 3 family. Mn(2+) is required as a cofactor.

The catalysed reaction is beta-D-fructose 1,6-bisphosphate + H2O = beta-D-fructose 6-phosphate + phosphate. It participates in carbohydrate biosynthesis; gluconeogenesis. This is Fructose-1,6-bisphosphatase class 3 from Lactococcus lactis subsp. lactis (strain IL1403) (Streptococcus lactis).